Reading from the N-terminus, the 606-residue chain is ATP-dependent rRNA helicase SPB4 (606 aa).

The Q motif signature appears at 7 to 35; that stretch reads WDNLGFSLLPWIRTGLDVMGFETMTPVQA. The Helicase ATP-binding domain occupies 38-224; that stretch reads IPMLAGNKDV…KTGLRNPVRI (187 aa). 51-58 serves as a coordination point for ATP; it reads SVTGSGKT. Positions 172–175 match the DEAD box motif; the sequence is DEAD. The Helicase C-terminal domain occupies 248-404; that stretch reads KLQLLVSILN…ELDLEVKGIT (157 aa). Residue Ser-254 is modified to Phosphoserine. The stretch at 539–582 forms a coiled coil; it reads KTLTKERKLERKEKMSLKRKAIEEELKAEELDENAEEERIKEDW.

This sequence belongs to the DEAD box helicase family. DDX55/SPB4 subfamily. Component of pre-60S ribosomal complexes.

It is found in the nucleus. It localises to the nucleolus. It catalyses the reaction ATP + H2O = ADP + phosphate + H(+). In terms of biological role, ATP-binding RNA helicase involved in the biogenesis of 60S ribosomal subunits. Binds 90S pre-ribosomal particles and dissociates from pre-60S ribosomal particles after processing of 27SB pre-rRNA. Required for the normal formation of 18S rRNA through the processing of pre-rRNAs at sites A0, A1 and A2, and the normal formation of 25S and 5.8S rRNAs through the processing of pre-rRNAs at sites C1 and C2. Also required for recruitment of NOG2 to pre-ribosomes. This chain is ATP-dependent rRNA helicase SPB4, found in Saccharomyces cerevisiae (strain ATCC 204508 / S288c) (Baker's yeast).